A 218-amino-acid polypeptide reads, in one-letter code: MIP18 family protein galla-1 (218 aa).

The tract at residues 1 to 59 is disordered; that stretch reads MLSYIKRKLSESDSGVSSVATVTSSCGGDSGRAGGTGSSESGTGSSSASISGRSQNADE. The span at 12 to 27 shows a compositional bias: low complexity; sequence SDSGVSSVATVTSSCG. The residue at position 14 (S14) is a Phosphoserine. The segment covering 28–37 has biased composition (gly residues); the sequence is GDSGRAGGTG. Low complexity predominate over residues 38–54; sequence SSESGTGSSSASISGRS. S65 is subject to Phosphoserine.

Belongs to the MIP18 family. Component of the CGX complex composed of crb, galla (galla-1 or galla-2) and Xpd. Interacts with crb (via intracellular domain). Is not able to interact with Xpd in the absence of crb.

Its subcellular location is the apical cell membrane. The protein localises to the cytoplasm. It is found in the cytoskeleton. The protein resides in the spindle. Its function is as follows. Component of the crb-galla-Xpd (CGX) complex which is essential for proper mitotic chromosome segregation in early embryos. The CGX complex is also required for cell proliferation in developing wing disks. In the CGX complex, acts with crb to recruit Xpd thus forming the functional complex. This Drosophila melanogaster (Fruit fly) protein is MIP18 family protein galla-1.